A 205-amino-acid chain; its full sequence is Urease accessory protein UreE (205 aa).

Basic and acidic residues predominate over residues 171 to 192; that stretch reads HHGHSHSHDHDHDHDHDHDHQH. Residues 171 to 205 are disordered; that stretch reads HHGHSHSHDHDHDHDHDHDHQHGPCCSHGHHHGHR.

Belongs to the UreE family.

Its subcellular location is the cytoplasm. Functionally, involved in urease metallocenter assembly. Binds nickel. Probably functions as a nickel donor during metallocenter assembly. The polypeptide is Urease accessory protein UreE (Burkholderia pseudomallei (strain K96243)).